A 308-amino-acid polypeptide reads, in one-letter code: Aspartate carbamoyltransferase catalytic subunit (308 aa).

Carbamoyl phosphate-binding residues include R57 and T58. K86 is a binding site for L-aspartate. Carbamoyl phosphate contacts are provided by R107, H135, and Q138. The L-aspartate site is built by R168 and R229. Carbamoyl phosphate contacts are provided by L268 and P269.

This sequence belongs to the aspartate/ornithine carbamoyltransferase superfamily. ATCase family. Heterooligomer of catalytic and regulatory chains.

It carries out the reaction carbamoyl phosphate + L-aspartate = N-carbamoyl-L-aspartate + phosphate + H(+). It participates in pyrimidine metabolism; UMP biosynthesis via de novo pathway; (S)-dihydroorotate from bicarbonate: step 2/3. Catalyzes the condensation of carbamoyl phosphate and aspartate to form carbamoyl aspartate and inorganic phosphate, the committed step in the de novo pyrimidine nucleotide biosynthesis pathway. The protein is Aspartate carbamoyltransferase catalytic subunit of Pyrococcus abyssi (strain GE5 / Orsay).